A 337-amino-acid polypeptide reads, in one-letter code: Endochitinase 37 (337 aa).

Positions Met-1–Ala-25 are cleaved as a signal peptide. In terms of domain architecture, GH18 spans Lys-38–Asn-337. Glu-160 functions as the Proton donor in the catalytic mechanism. N-linked (GlcNAc...) asparagine glycosylation is present at Asn-331.

This sequence belongs to the glycosyl hydrolase 18 family. Chitinase class V subfamily. As to quaternary structure, monomer.

It localises to the secreted. The catalysed reaction is Random endo-hydrolysis of N-acetyl-beta-D-glucosaminide (1-&gt;4)-beta-linkages in chitin and chitodextrins.. In terms of biological role, secreted chitinase involved in the degradation of chitin, a component of the cell walls of fungi and exoskeletal elements of some animals (including worms and arthropods). Plays a morphogenetic role during apical growth, cell division and differentiation (cell wall morphogenesis). May be involved in the degradation and further assimilation of phytopathogenic fungi, namely mycoparasitism, the major mechanism accounting for the antagonistic activity against phytopathogenic fungi displayed by Trichoderma. In Trichoderma harzianum (Hypocrea lixii), this protein is Endochitinase 37 (chit37).